Consider the following 750-residue polypeptide: Ribosomal RNA large subunit methyltransferase K/L (750 aa).

Positions 46-157 constitute a THUMP domain; it reads TAYRLCLWSR…RGEAILSLDL (112 aa).

The protein belongs to the methyltransferase superfamily. RlmKL family.

It localises to the cytoplasm. It carries out the reaction guanosine(2445) in 23S rRNA + S-adenosyl-L-methionine = N(2)-methylguanosine(2445) in 23S rRNA + S-adenosyl-L-homocysteine + H(+). The catalysed reaction is guanosine(2069) in 23S rRNA + S-adenosyl-L-methionine = N(2)-methylguanosine(2069) in 23S rRNA + S-adenosyl-L-homocysteine + H(+). Functionally, specifically methylates the guanine in position 2445 (m2G2445) and the guanine in position 2069 (m7G2069) of 23S rRNA. The polypeptide is Ribosomal RNA large subunit methyltransferase K/L (Pseudomonas savastanoi pv. phaseolicola (strain 1448A / Race 6) (Pseudomonas syringae pv. phaseolicola (strain 1448A / Race 6))).